The chain runs to 258 residues: Allene oxide cyclase 3, chloroplastic (258 aa).

The N-terminal 56 residues, 1–56 (MASSSAAMSLESISMTTLNNLSRNHQSHRSSLLGFSRSFQNLGISSNGPDFSSRSR), are a transit peptide targeting the chloroplast.

It belongs to the allene oxide cyclase family. Highly expressed in fully developed leaves.

The protein localises to the plastid. It is found in the chloroplast. It catalyses the reaction (9Z,13S,15Z)-12,13-epoxyoctadeca-9,11,15-trienoate = (9S,13S,15Z)-12-oxophyto-10,15-dienoate. In terms of biological role, involved in the production of 12-oxo-phytodienoic acid (OPDA), a precursor of jasmonic acid. The chain is Allene oxide cyclase 3, chloroplastic (AOC3) from Arabidopsis thaliana (Mouse-ear cress).